The primary structure comprises 434 residues: Probable transcription factor HMS1 (434 aa).

Positions 266-341 (TGRVSHNIIE…TKSIEYICHL (76 aa)) constitute a bHLH domain. A disordered region spans residues 365-434 (HLTEPSQPLS…DMDFNNAGDF (70 aa)). Composition is skewed to polar residues over residues 368-382 (EPSQ…SEQV) and 402-423 (PLHN…TNNS).

In terms of assembly, interacts with the G1/S-specific cyclin PCL1. Post-translationally, phosphorylated by the cyclin-CDK complex PCL1-PHO85.

The protein resides in the nucleus. Involved in exit from mitosis and pseudohyphal differentiation. The polypeptide is Probable transcription factor HMS1 (HMS1) (Saccharomyces cerevisiae (strain ATCC 204508 / S288c) (Baker's yeast)).